We begin with the raw amino-acid sequence, 183 residues long: Calcium-binding protein M (183 aa).

Residue glycine 2 is the site of N-myristoyl glycine attachment. EF-hand domains are found at residues 25 to 60, 61 to 96, 97 to 132, and 142 to 177; these read EEVA…KLPN, YPED…IGKG, SAED…MKNV, and DIEL…SPSL. Residues aspartate 74, aspartate 76, serine 78, threonine 80, glutamate 85, aspartate 110, aspartate 112, serine 114, glutamate 121, aspartate 155, aspartate 157, asparagine 159, and glutamate 166 each contribute to the Ca(2+) site.

It belongs to the recoverin family.

This is Calcium-binding protein M (cbpM) from Dictyostelium discoideum (Social amoeba).